A 653-amino-acid chain; its full sequence is Glyceraldehyde-3-phosphate:ferredoxin oxidoreductase (653 aa).

Residues Arg70, Gly89, Arg196, Ala197, Gly199, and Arg206 each coordinate tungstopterin. The [4Fe-4S] cluster site is built by Cys333 and Cys337. Residues Asp378, Asp383, and Asp544 each contribute to the tungstopterin site. Cys549 lines the [4Fe-4S] cluster pocket.

It belongs to the AOR/FOR family. In terms of assembly, monomer. [4Fe-4S] cluster serves as cofactor. It depends on tungstopterin as a cofactor.

The enzyme catalyses D-glyceraldehyde 3-phosphate + 2 oxidized [2Fe-2S]-[ferredoxin] + H2O = (2R)-3-phosphoglycerate + 2 reduced [2Fe-2S]-[ferredoxin] + 3 H(+). Its activity is regulated as follows. Sensitive to oxygen. Activity increased by 58%-93% in the presence of acetyl phosphate, 3-phosphoglycerate or 2,3-bisphosphoglycerate at 10 mM concentration. Inhibited by up to 25% in the presence of crotonaldehyde or formaldehyde at 10 mM concentration. Inhibited by up to 50% by sodium dithionate. 3.5-fold increase in activity observed by addition of potassium phosphate or sodium arsenate at 200 mM concentration. Activity enhanced by potassium chloride, sodium citrate or sodium sulfate at 200 mM concentration. Catalyzes the oxidation of glyceraldehyde-3-phosphate to 3-phosphoglycerate. Uses ferredoxin as electron acceptor. In vitro can also use benzyl viologen, but not NADP or NAD, as electron acceptor. Probably acts as a glycolytic enzyme in place of glyceraldehyde-3-phosphate dehydrogenase (GAPDH) and phosphoglycerate kinase (PGK) in an unusual Emden-Meyerhof glycolysis. This chain is Glyceraldehyde-3-phosphate:ferredoxin oxidoreductase, found in Pyrococcus furiosus (strain ATCC 43587 / DSM 3638 / JCM 8422 / Vc1).